A 336-amino-acid chain; its full sequence is Di/tripeptide transport system permease protein DppB (336 aa).

6 consecutive transmembrane segments (helical) span residues 10-30 (GLLIPTFFGVTLLTFALIRLI), 102-122 (LSLAAMLFAGTFGLLAGVIAA), 145-165 (IFWWGLILIMLFSVSLGWTPV), 198-218 (AVRHLILPAIVLGTIPLAVIA), 257-277 (LIPVLTVFGLQVGTLLAGAVL), and 307-327 (ILLVATLVILVNFVVDILYGL). An ABC transmembrane type-1 domain is found at 96–325 (FPATLELSLA…LVNFVVDILY (230 aa)).

Belongs to the binding-protein-dependent transport system permease family. OppBC subfamily. The complex is composed of two ATP-binding proteins (DppD and DppF), two transmembrane proteins (DppB and DppC) and a solute-binding protein (DppA1-A5). Five orthologous SBPs (DppA1-A5) are present in P.aeruginosa, which increases the substrate specificity of the DppBCDF transporter.

Its subcellular location is the cell inner membrane. In terms of biological role, part of the ABC transporter DppABCDF involved in the uptake of various di/tripeptides. Is also involved in the uptake of phaseolotoxin, a toxic tripeptide inhibiting the enzyme ornithine carbamoyltransferase. Responsible for the translocation of the substrate across the membrane. The protein is Di/tripeptide transport system permease protein DppB of Pseudomonas aeruginosa (strain UCBPP-PA14).